The following is a 1877-amino-acid chain: Transmembrane protein 131 (1877 aa).

The first 20 residues, 1 to 20 (MGKRAGGAAAAAAAASTSSA), serve as a signal peptide directing secretion. Residues 21-1115 (AGLEPAAGRG…AEALPRPNWE (1095 aa)) are Lumenal-facing. The interval 107–281 (RFEPPMLDFH…ETKGVMRASF (175 aa)) is papD-L domain. The helical transmembrane segment at 1116-1136 (LALYIIISGVMSALFLLVIGT) threads the bilayer. Residues 1137–1877 (AYLEAQGIWE…WSNSHFPHEN (741 aa)) are Cytoplasmic-facing. Polar residues predominate over residues 1197-1227 (NASSRPGTGSHRQCGTSVHPHSSHGSKNSAD). Disordered stretches follow at residues 1197 to 1573 (NASS…SSST), 1590 to 1655 (LKQR…NPTF), 1679 to 1707 (SDFS…SPVS), and 1830 to 1852 (NSAA…TYNP). Residues 1233–1258 (TRNSSSMSSRTSPQAAASQSTSKTSP) are compositionally biased toward low complexity. Positions 1301–1311 (QPPPPVPQHQE) are enriched in pro residues. Phosphoserine occurs at positions 1318 and 1338. Composition is skewed to basic and acidic residues over residues 1326 to 1339 (SHPE…HSSE) and 1349 to 1360 (AMDKDFDHHDSS). Serine 1371 is modified (phosphoserine). Residues 1376–1391 (SKGKGKSLQQRKAKPP) are compositionally biased toward basic residues. A compositionally biased stretch (basic and acidic residues) spans 1392 to 1414 (KKQEEKEKRGKGKPQEDELKDAL). The span at 1420–1432 (SSTTTETSNPDTE) shows a compositional bias: low complexity. Composition is skewed to polar residues over residues 1507–1523 (TLAS…TKGT) and 1538–1550 (LPSS…TSSS). Over residues 1599 to 1608 (PASPSLPTAP) the composition is skewed to pro residues. Low complexity predominate over residues 1609 to 1646 (CPFTSRGSYSSVVNSSGSDTKAKQTSSSKSKLTKAASL). Residues 1830-1839 (NSAAAHTPSA) are compositionally biased toward polar residues. Phosphoserine is present on residues serine 1857 and serine 1865.

The protein belongs to the TMEM131 family. Interacts (via PapD-L domain) with COL1A2 (via C-terminus); the interaction is direct, may occur with other collagen proteins, and is involved in assembly and TRAPPIII ER-to-Golgi transport complex-dependent secretion of collagen. Interacts (via C-terminus) with TRAPPC8 (via C-terminus); the interaction is direct.

The protein resides in the membrane. Functionally, collagen binding transmembrane protein involved in collagen secretion by recruiting the ER-to-Golgi transport complex TRAPPIII. May play a role in the immune response to viral infection. The protein is Transmembrane protein 131 of Mus musculus (Mouse).